A 186-amino-acid polypeptide reads, in one-letter code: Lactoylglutathione lyase (186 aa).

In terms of domain architecture, VOC spans 28-175 (FMQQTMFRIK…DGYWIELFDR (148 aa)). Gln-31 and Arg-35 together coordinate substrate. Gln-31 provides a ligand contact to Zn(2+). Glu-97 is a binding site for Zn(2+). Substrate-binding positions include Asn-101, Arg-121, His-125, and 155 to 156 (KM). His-125 provides a ligand contact to Zn(2+). Residue Glu-171 coordinates Zn(2+). Catalysis depends on Glu-171, which acts as the Proton donor/acceptor.

This sequence belongs to the glyoxalase I family. The cofactor is Zn(2+).

The catalysed reaction is (R)-S-lactoylglutathione = methylglyoxal + glutathione. It participates in secondary metabolite metabolism; methylglyoxal degradation; (R)-lactate from methylglyoxal: step 1/2. Functionally, catalyzes the conversion of hemimercaptal, formed from methylglyoxal and glutathione, to S-lactoylglutathione. The chain is Lactoylglutathione lyase from Cicer arietinum (Chickpea).